We begin with the raw amino-acid sequence, 320 residues long: Putative S-adenosyl-L-methionine-dependent methyltransferase MAP_4078 (320 aa).

S-adenosyl-L-methionine contacts are provided by residues D132 and D161–L162. Residues P294–R320 form a disordered region.

It belongs to the UPF0677 family.

Functionally, exhibits S-adenosyl-L-methionine-dependent methyltransferase activity. This chain is Putative S-adenosyl-L-methionine-dependent methyltransferase MAP_4078, found in Mycolicibacterium paratuberculosis (strain ATCC BAA-968 / K-10) (Mycobacterium paratuberculosis).